Here is a 72-residue protein sequence, read N- to C-terminus: Antitoxin VapB11 (72 aa).

Functionally, antitoxin component of a type II toxin-antitoxin (TA) system. In Mycobacterium tuberculosis (strain CDC 1551 / Oshkosh), this protein is Antitoxin VapB11 (vapB11).